The following is a 159-amino-acid chain: MKIYTQRLDEIASDQTFETLELTFDTRQKSRFRATLTNGTDIGADLPRTGILRSGSFIATNEGDILRIDAKPEQLMQVTAKTDFELLKAAYHLGNRHVPLMLTPYALYFEPDHVLAEMVEGLGLQVKQVEHAFEPESGAYAQHNHDHRLSPIKSLHHVH.

It belongs to the UreE family.

It localises to the cytoplasm. Involved in urease metallocenter assembly. Binds nickel. Probably functions as a nickel donor during metallocenter assembly. This is Urease accessory protein UreE from Acinetobacter baylyi (strain ATCC 33305 / BD413 / ADP1).